The sequence spans 402 residues: Flavohemoprotein (402 aa).

One can recognise a Globin domain in the interval 1-136; that stretch reads MLSEKTIEIV…IADAFISIEA (136 aa). Position 85 (His85) interacts with heme b. Residues Tyr95 and Glu135 each act as charge relay system in the active site. The segment at 147–402 is reductase; sequence GGWKDFRNFV…EFFGPAASLQ (256 aa). An FAD-binding FR-type domain is found at 150 to 260; sequence KDFRNFVVVK…SAPAGDFVLN (111 aa). FAD is bound by residues Tyr188 and 204-207; that span reads RQYS. 273–278 contacts NADP(+); sequence GVGITP. 394–397 serves as a coordination point for FAD; that stretch reads FFGP.

The protein belongs to the globin family. Two-domain flavohemoproteins subfamily. This sequence in the C-terminal section; belongs to the flavoprotein pyridine nucleotide cytochrome reductase family. Requires heme b as cofactor. FAD serves as cofactor.

The catalysed reaction is 2 nitric oxide + NADPH + 2 O2 = 2 nitrate + NADP(+) + H(+). The enzyme catalyses 2 nitric oxide + NADH + 2 O2 = 2 nitrate + NAD(+) + H(+). In terms of biological role, is involved in NO detoxification in an aerobic process, termed nitric oxide dioxygenase (NOD) reaction that utilizes O(2) and NAD(P)H to convert NO to nitrate, which protects the bacterium from various noxious nitrogen compounds. Therefore, plays a central role in the inducible response to nitrosative stress. This is Flavohemoprotein from Bacillus thuringiensis subsp. konkukian (strain 97-27).